The sequence spans 220 residues: Uracil-DNA glycosylase (220 aa).

Residue D65 is the Proton acceptor of the active site.

It belongs to the uracil-DNA glycosylase (UDG) superfamily. UNG family.

Its subcellular location is the cytoplasm. It catalyses the reaction Hydrolyzes single-stranded DNA or mismatched double-stranded DNA and polynucleotides, releasing free uracil.. Its function is as follows. Excises uracil residues from the DNA which can arise as a result of misincorporation of dUMP residues by DNA polymerase or due to deamination of cytosine. The chain is Uracil-DNA glycosylase from Azobacteroides pseudotrichonymphae genomovar. CFP2.